A 261-amino-acid chain; its full sequence is Cytochrome c oxidase subunit 3 (261 aa).

Residues 1-15 (MTHQTHAYHMVNPSP) lie on the Mitochondrial matrix side of the membrane. The chain crosses the membrane as a helical span at residues 16 to 34 (WPLTGALSALLMTSGLAMW). Residues 35–40 (FHYNLT) lie on the Mitochondrial intermembrane side of the membrane. The chain crosses the membrane as a helical span at residues 41-66 (LLLTLGMTTNLLTMYQWWRDIIREST). Topologically, residues 67 to 72 (FQGHHT) are mitochondrial matrix. Residues 73–105 (PIVQKGLRYGMILFIISEVFFFAGFFWAFYHSS) form a helical membrane-spanning segment. At 106 to 128 (LAPTPELGGCWPPTGIIPLNPLE) the chain is on the mitochondrial intermembrane side. Residues 129–152 (VPLLNTSVLLASGVSITWAHHSLM) form a helical membrane-spanning segment. Over 153 to 155 (EGN) the chain is Mitochondrial matrix. A helical transmembrane segment spans residues 156-183 (RKHMLQALFITISLGVYFTLLQASEYYE). Residues 184-190 (TSFTISD) lie on the Mitochondrial intermembrane side of the membrane. The helical transmembrane segment at 191–223 (GVYGSTFFMATGFHGLHVIIGSTFLIVCFLRQL) threads the bilayer. Residues 224–232 (KYHFTSNHH) lie on the Mitochondrial matrix side of the membrane. Residues 233–256 (FGFEAAAWYWHFVDVVWLFLYVSI) traverse the membrane as a helical segment. The Mitochondrial intermembrane segment spans residues 257 to 261 (YWWGS).

Belongs to the cytochrome c oxidase subunit 3 family. As to quaternary structure, component of the cytochrome c oxidase (complex IV, CIV), a multisubunit enzyme composed of 14 subunits. The complex is composed of a catalytic core of 3 subunits MT-CO1, MT-CO2 and MT-CO3, encoded in the mitochondrial DNA, and 11 supernumerary subunits COX4I, COX5A, COX5B, COX6A, COX6B, COX6C, COX7A, COX7B, COX7C, COX8 and NDUFA4, which are encoded in the nuclear genome. The complex exists as a monomer or a dimer and forms supercomplexes (SCs) in the inner mitochondrial membrane with NADH-ubiquinone oxidoreductase (complex I, CI) and ubiquinol-cytochrome c oxidoreductase (cytochrome b-c1 complex, complex III, CIII), resulting in different assemblies (supercomplex SCI(1)III(2)IV(1) and megacomplex MCI(2)III(2)IV(2)).

Its subcellular location is the mitochondrion inner membrane. It carries out the reaction 4 Fe(II)-[cytochrome c] + O2 + 8 H(+)(in) = 4 Fe(III)-[cytochrome c] + 2 H2O + 4 H(+)(out). Functionally, component of the cytochrome c oxidase, the last enzyme in the mitochondrial electron transport chain which drives oxidative phosphorylation. The respiratory chain contains 3 multisubunit complexes succinate dehydrogenase (complex II, CII), ubiquinol-cytochrome c oxidoreductase (cytochrome b-c1 complex, complex III, CIII) and cytochrome c oxidase (complex IV, CIV), that cooperate to transfer electrons derived from NADH and succinate to molecular oxygen, creating an electrochemical gradient over the inner membrane that drives transmembrane transport and the ATP synthase. Cytochrome c oxidase is the component of the respiratory chain that catalyzes the reduction of oxygen to water. Electrons originating from reduced cytochrome c in the intermembrane space (IMS) are transferred via the dinuclear copper A center (CU(A)) of subunit 2 and heme A of subunit 1 to the active site in subunit 1, a binuclear center (BNC) formed by heme A3 and copper B (CU(B)). The BNC reduces molecular oxygen to 2 water molecules using 4 electrons from cytochrome c in the IMS and 4 protons from the mitochondrial matrix. The polypeptide is Cytochrome c oxidase subunit 3 (MT-CO3) (Felis catus (Cat)).